The sequence spans 132 residues: Agouti-signaling protein (132 aa).

An N-terminal signal peptide occupies residues 1–22; it reads MDVTRLLLATLLVFLCFFTAYS. Residue Asn-39 is glycosylated (N-linked (GlcNAc...) asparagine). A disordered region spans residues 62–88; sequence ISRKEAEKKRSSKKEASMKKVARPRTP. A compositionally biased stretch (basic and acidic residues) spans 63–79; that stretch reads SRKEAEKKRSSKKEASM. Disulfide bonds link Cys-93-Cys-108, Cys-100-Cys-114, Cys-107-Cys-125, Cys-111-Cys-132, and Cys-116-Cys-123. The Agouti domain occupies 93 to 132; that stretch reads CVATRDSCKPPAPACCDPCASCQCRFFRSACSCRVLSLNC.

Its subcellular location is the secreted. In terms of biological role, involved in the regulation of melanogenesis. The binding of ASP to MC1R precludes alpha-MSH initiated signaling and thus blocks production of cAMP, leading to a down-regulation of eumelanogenesis (brown/black pigment) and thus increasing synthesis of pheomelanin (yellow/red pigment). This chain is Agouti-signaling protein (ASIP), found in Macaca radiata (Bonnet macaque).